The following is a 432-amino-acid chain: uncharacterized protein (432 aa).

A run of 13 helical transmembrane segments spans residues 7-27, 29-49, 68-88, 124-144, 156-176, 196-216, 241-261, 266-286, 291-311, 326-346, 358-378, 379-399, and 412-432; these read FIGL…PDIY, GIVI…PLPV, EALT…FMLA, FLSM…IALG, FLLL…IIGS, VGFP…YIYF, LVIF…SEIF, FDSV…LVEV, KIDW…GVIV, ILGN…TIIL, IIVP…LILA, VGMS…NAIV, and IGMI…ILYL.

The protein belongs to the CitM (TC 2.A.11) transporter family.

The protein resides in the cell membrane. This is an uncharacterized protein from Methanocaldococcus jannaschii (strain ATCC 43067 / DSM 2661 / JAL-1 / JCM 10045 / NBRC 100440) (Methanococcus jannaschii).